The primary structure comprises 349 residues: MASKKVCIVGSGNWGSAIAKIVGGNAAQLAQFDPRVTMWVFEEDIGGKKLTEIINTQHENVKYLPGHKLPPNVVAVPDVVQAAADADILIFVVPHQFIGKICDQLKGHLKANATGISLIKGVDEGPNGLKLISEVIGEHLGIPMSVLMGANIASEVADEKFCETTIGCKDPAQGQLLKELMQTPNFRITVVQEVDTVEICGALKNVVAVGAGFCDGLGFGDNTKAAVIRLGLMEMIAFAKLFRSGPVSSATFLESCGVADLITTCYGGRNRKVAEAFARTGKSIEQLEKELLNGQKLQGPETARELHSILQHKGLVDKFPLFMAVYKVCYEGQPVGEFIRCLQNHPEHM.

10-15 is an NAD(+) binding site; it reads GSGNWG. Lysine 120 is a binding site for substrate. NAD(+) is bound at residue alanine 153. Serine 154 is subject to Phosphoserine. Catalysis depends on lysine 204, which acts as the Proton acceptor. Residue arginine 269 coordinates NAD(+). Residue 269–270 coordinates substrate; sequence RN. Lysine 289 bears the N6-succinyllysine mark. Positions 296 and 298 each coordinate NAD(+). Tyrosine 326 bears the Phosphotyrosine mark.

Belongs to the NAD-dependent glycerol-3-phosphate dehydrogenase family. As to quaternary structure, homodimer.

Its subcellular location is the cytoplasm. The catalysed reaction is sn-glycerol 3-phosphate + NAD(+) = dihydroxyacetone phosphate + NADH + H(+). In terms of biological role, has glycerol-3-phosphate dehydrogenase activity. The polypeptide is Glycerol-3-phosphate dehydrogenase [NAD(+)], cytoplasmic (GPD1) (Pongo abelii (Sumatran orangutan)).